Reading from the N-terminus, the 442-residue chain is Thymidine phosphorylase (442 aa).

It belongs to the thymidine/pyrimidine-nucleoside phosphorylase family. Homodimer.

It catalyses the reaction thymidine + phosphate = 2-deoxy-alpha-D-ribose 1-phosphate + thymine. The protein operates within pyrimidine metabolism; dTMP biosynthesis via salvage pathway; dTMP from thymine: step 1/2. Its function is as follows. The enzymes which catalyze the reversible phosphorolysis of pyrimidine nucleosides are involved in the degradation of these compounds and in their utilization as carbon and energy sources, or in the rescue of pyrimidine bases for nucleotide synthesis. The polypeptide is Thymidine phosphorylase (Vibrio vulnificus (strain CMCP6)).